The primary structure comprises 245 residues: Phosphoribosylaminoimidazole-succinocarboxamide synthase (245 aa).

This sequence belongs to the SAICAR synthetase family.

The enzyme catalyses 5-amino-1-(5-phospho-D-ribosyl)imidazole-4-carboxylate + L-aspartate + ATP = (2S)-2-[5-amino-1-(5-phospho-beta-D-ribosyl)imidazole-4-carboxamido]succinate + ADP + phosphate + 2 H(+). Its pathway is purine metabolism; IMP biosynthesis via de novo pathway; 5-amino-1-(5-phospho-D-ribosyl)imidazole-4-carboxamide from 5-amino-1-(5-phospho-D-ribosyl)imidazole-4-carboxylate: step 1/2. This chain is Phosphoribosylaminoimidazole-succinocarboxamide synthase, found in Acaryochloris marina (strain MBIC 11017).